The chain runs to 146 residues: Hemoglobin subunit theta (146 aa).

A Globin domain is found at 2 to 146 (HFTAEEKSVI…VATALAHKYH (145 aa)). Heme b-binding residues include histidine 63 and histidine 92.

This sequence belongs to the globin family.

The sequence is that of Hemoglobin subunit theta from Sus scrofa (Pig).